A 399-amino-acid polypeptide reads, in one-letter code: Probable tRNA sulfurtransferase (399 aa).

Positions 60-165 constitute a THUMP domain; it reads YAVMERLKRV…TEGTYISCET (106 aa). ATP contacts are provided by residues 183–184, 208–209, Arg265, Gly287, and Gln296; these read LL and HF.

Belongs to the ThiI family.

Its subcellular location is the cytoplasm. The catalysed reaction is [ThiI sulfur-carrier protein]-S-sulfanyl-L-cysteine + a uridine in tRNA + 2 reduced [2Fe-2S]-[ferredoxin] + ATP + H(+) = [ThiI sulfur-carrier protein]-L-cysteine + a 4-thiouridine in tRNA + 2 oxidized [2Fe-2S]-[ferredoxin] + AMP + diphosphate. It carries out the reaction [ThiS sulfur-carrier protein]-C-terminal Gly-Gly-AMP + S-sulfanyl-L-cysteinyl-[cysteine desulfurase] + AH2 = [ThiS sulfur-carrier protein]-C-terminal-Gly-aminoethanethioate + L-cysteinyl-[cysteine desulfurase] + A + AMP + 2 H(+). The protein operates within cofactor biosynthesis; thiamine diphosphate biosynthesis. Functionally, catalyzes the ATP-dependent transfer of a sulfur to tRNA to produce 4-thiouridine in position 8 of tRNAs, which functions as a near-UV photosensor. Also catalyzes the transfer of sulfur to the sulfur carrier protein ThiS, forming ThiS-thiocarboxylate. This is a step in the synthesis of thiazole, in the thiamine biosynthesis pathway. The sulfur is donated as persulfide by IscS. The chain is Probable tRNA sulfurtransferase from Brevibacillus brevis (strain 47 / JCM 6285 / NBRC 100599).